The primary structure comprises 420 residues: RING finger protein 39 (420 aa).

The segment at 88 to 135 adopts an RING-type zinc-finger fold; that stretch reads CPLCGGSFEDPVLLACEHSFCRACLARRWGTPPATGTEASPTACPCCG. The B30.2/SPRY domain occupies 210 to 420; it reads DDLPEDYPVV…APLRIVPAES (211 aa).

Expressed in testis.

It localises to the cytoplasm. The catalysed reaction is S-ubiquitinyl-[E2 ubiquitin-conjugating enzyme]-L-cysteine + [acceptor protein]-L-lysine = [E2 ubiquitin-conjugating enzyme]-L-cysteine + N(6)-ubiquitinyl-[acceptor protein]-L-lysine.. It participates in protein modification; protein ubiquitination. Its function is as follows. Plays an inhibitory role in anti-RNA viral innate immunity by targeting the adapter DDX3X and promoting its 'Lys-48'-linked polyubiquitination. Alternatively, enhances the cGAS-STING pathway activation by promoting 'Lys-63'-linked ubiquitination of STING1, facilitating the STING1-TBK1 complex formation and STING1 activation. Functionally, (Microbial infection) Plays a positive role in human immunodeficiency virus (HIV-1) replication. The polypeptide is RING finger protein 39 (RNF39) (Homo sapiens (Human)).